Here is a 271-residue protein sequence, read N- to C-terminus: uncharacterized protein (271 aa).

Residues 1–22 (MARELLFLACAIVIADSWPAKA) form the signal peptide.

This is an uncharacterized protein from Sinorhizobium fredii (strain NBRC 101917 / NGR234).